A 670-amino-acid polypeptide reads, in one-letter code: Sodium, potassium, lithium and rubidium/H(+) antiporter (670 aa).

Helical transmembrane passes span 5–27 (LVVLVLLTIIAISNIVNRFIPFI), 46–66 (GLHFELNTELFFVLFIAPLLF), 83–103 (PILLLALGLVFATVIVGGYTI), 105–125 (WMIPAIPLAAAFGLAAILSPT), 156–176 (ASGLVAFKFAIAAAVTGAFSL), 182–202 (SFVFISLGGLLCGVVISFLII), 228–248 (FVIYLAAEEIGVSGILAVVAG), 276–296 (IILFILNGLVFVILGTQIPDV), 314–334 (YILVITFTLMLLRFLWVLFFW), 355–375 (LLISISGVRGAVTLAGSFSIP), and 389–409 (LILFLAAGVILCTLVIATVVL).

The protein belongs to the monovalent cation:proton antiporter 1 (CPA1) transporter (TC 2.A.36) family. Nhak (TC 2.A.36.3.2) subfamily.

The protein localises to the cell membrane. Functionally, transporter involved in the efflux of sodium, potassium, lithium and rubidium. The sequence is that of Sodium, potassium, lithium and rubidium/H(+) antiporter (nhaK) from Bacillus subtilis (strain 168).